Consider the following 477-residue polypeptide: 3-isopropylmalate dehydratase large subunit (477 aa).

[4Fe-4S] cluster is bound by residues cysteine 352, cysteine 413, and cysteine 416.

Belongs to the aconitase/IPM isomerase family. LeuC type 1 subfamily. Heterodimer of LeuC and LeuD. The cofactor is [4Fe-4S] cluster.

It carries out the reaction (2R,3S)-3-isopropylmalate = (2S)-2-isopropylmalate. It functions in the pathway amino-acid biosynthesis; L-leucine biosynthesis; L-leucine from 3-methyl-2-oxobutanoate: step 2/4. Catalyzes the isomerization between 2-isopropylmalate and 3-isopropylmalate, via the formation of 2-isopropylmaleate. The polypeptide is 3-isopropylmalate dehydratase large subunit (Pseudomonas putida (strain GB-1)).